Reading from the N-terminus, the 265-residue chain is Hydroxyethylthiazole kinase (265 aa).

Methionine 50 is a binding site for substrate. ATP is bound by residues arginine 125 and threonine 171. Position 198 (glycine 198) interacts with substrate.

Belongs to the Thz kinase family. Mg(2+) is required as a cofactor.

The enzyme catalyses 5-(2-hydroxyethyl)-4-methylthiazole + ATP = 4-methyl-5-(2-phosphooxyethyl)-thiazole + ADP + H(+). It functions in the pathway cofactor biosynthesis; thiamine diphosphate biosynthesis; 4-methyl-5-(2-phosphoethyl)-thiazole from 5-(2-hydroxyethyl)-4-methylthiazole: step 1/1. Catalyzes the phosphorylation of the hydroxyl group of 4-methyl-5-beta-hydroxyethylthiazole (THZ). The chain is Hydroxyethylthiazole kinase from Salmonella paratyphi C (strain RKS4594).